The primary structure comprises 247 residues: Ribosomal RNA small subunit methyltransferase G (247 aa).

S-adenosyl-L-methionine is bound by residues Gly86, Leu91, and Arg154.

It belongs to the methyltransferase superfamily. RNA methyltransferase RsmG family.

It localises to the cytoplasm. Functionally, specifically methylates the N7 position of a guanine in 16S rRNA. This chain is Ribosomal RNA small subunit methyltransferase G, found in Leptospira biflexa serovar Patoc (strain Patoc 1 / Ames).